The following is a 120-amino-acid chain: Large ribosomal subunit protein uL14 (120 aa).

It belongs to the universal ribosomal protein uL14 family. As to quaternary structure, part of the 50S ribosomal subunit. Forms a cluster with proteins L3 and L19. In the 70S ribosome, L14 and L19 interact and together make contacts with the 16S rRNA in bridges B5 and B8.

Binds to 23S rRNA. Forms part of two intersubunit bridges in the 70S ribosome. This chain is Large ribosomal subunit protein uL14, found in Aster yellows witches'-broom phytoplasma (strain AYWB).